We begin with the raw amino-acid sequence, 116 residues long: Flagellar transcriptional regulator FlhD (116 aa).

The protein belongs to the FlhD family. Homodimer; disulfide-linked. Forms a heterohexamer composed of two FlhC and four FlhD subunits. Each FlhC binds a FlhD dimer, forming a heterotrimer, and a hexamer assembles by dimerization of two heterotrimers.

Its subcellular location is the cytoplasm. Its function is as follows. Functions in complex with FlhC as a master transcriptional regulator that regulates transcription of several flagellar and non-flagellar operons by binding to their promoter region. Activates expression of class 2 flagellar genes, including fliA, which is a flagellum-specific sigma factor that turns on the class 3 genes. Also regulates genes whose products function in a variety of physiological pathways. The protein is Flagellar transcriptional regulator FlhD of Yersinia pseudotuberculosis serotype O:1b (strain IP 31758).